A 366-amino-acid chain; its full sequence is Ribosomal RNA large subunit methyltransferase M (366 aa).

S-adenosyl-L-methionine-binding positions include Ser188, 221-224 (CPGG), Asp240, Asp260, and Asp277. Lys306 functions as the Proton acceptor in the catalytic mechanism.

This sequence belongs to the class I-like SAM-binding methyltransferase superfamily. RNA methyltransferase RlmE family. RlmM subfamily. As to quaternary structure, monomer.

It is found in the cytoplasm. It catalyses the reaction cytidine(2498) in 23S rRNA + S-adenosyl-L-methionine = 2'-O-methylcytidine(2498) in 23S rRNA + S-adenosyl-L-homocysteine + H(+). Catalyzes the 2'-O-methylation at nucleotide C2498 in 23S rRNA. This is Ribosomal RNA large subunit methyltransferase M from Citrobacter koseri (strain ATCC BAA-895 / CDC 4225-83 / SGSC4696).